Here is a 150-residue protein sequence, read N- to C-terminus: Large ribosomal subunit protein uL13 (150 aa).

The protein belongs to the universal ribosomal protein uL13 family. Part of the 50S ribosomal subunit.

This protein is one of the early assembly proteins of the 50S ribosomal subunit, although it is not seen to bind rRNA by itself. It is important during the early stages of 50S assembly. The chain is Large ribosomal subunit protein uL13 from Sulfurihydrogenibium sp. (strain YO3AOP1).